A 320-amino-acid polypeptide reads, in one-letter code: Cytochrome f (320 aa).

A signal peptide spans 1 to 35; sequence MQTRNAFSWLKKQITRSISVSLMIYILTRTSISSA. Heme is bound by residues tyrosine 36, cysteine 56, cysteine 59, and histidine 60. Residues 286 to 306 form a helical membrane-spanning segment; sequence VQGLLFFLASVILAQIFLVLK.

Belongs to the cytochrome f family. In terms of assembly, the 4 large subunits of the cytochrome b6-f complex are cytochrome b6, subunit IV (17 kDa polypeptide, petD), cytochrome f and the Rieske protein, while the 4 small subunits are PetG, PetL, PetM and PetN. The complex functions as a dimer. Heme is required as a cofactor.

Its subcellular location is the plastid. The protein localises to the chloroplast thylakoid membrane. Its function is as follows. Component of the cytochrome b6-f complex, which mediates electron transfer between photosystem II (PSII) and photosystem I (PSI), cyclic electron flow around PSI, and state transitions. This is Cytochrome f from Nicotiana sylvestris (Wood tobacco).